The following is a 430-amino-acid chain: BSD domain-containing protein 1 (430 aa).

S92 and S166 each carry phosphoserine. A BSD domain is found at 146–198 (WLSQFCLEEKKGEISELLVGSPSIRALYTKMVPAAVSHSEFWHRYFYKVHQLE). 2 disordered regions span residues 247–298 (STFP…APEA) and 319–398 (LAVD…WEKD). The span at 276–291 (PSESSESISLVTQIAN) shows a compositional bias: polar residues. Residues 350–367 (PPARVETLREEAPTDLRV) are compositionally biased toward basic and acidic residues. T356 is modified (phosphothreonine). The span at 371-390 (NSDSGKSTPSNNGKKGSSTD) shows a compositional bias: polar residues. Residues S387, S388, and S418 each carry the phosphoserine modification.

The chain is BSD domain-containing protein 1 (BSDC1) from Homo sapiens (Human).